Reading from the N-terminus, the 72-residue chain is Antimicrobial peptide MeuNaTxbeta-4 (72 aa).

The N-terminal stretch at 1–5 (LIGVK) is a signal peptide. The LCN-type CS-alpha/beta domain occupies 7 to 69 (EHGYLLDKYT…LWHYETNKCN (63 aa)). Disulfide bonds link cysteine 18–cysteine 68, cysteine 22–cysteine 43, cysteine 29–cysteine 50, and cysteine 33–cysteine 52.

As to expression, expressed by the venom gland.

The protein resides in the secreted. In terms of biological role, antimicrobial peptide with weak activity against both Gram-positive and -negative bacteria. Its antibiotic activity is potentiated by other antibacterial peptides such as Meucin-49. The sequence is that of Antimicrobial peptide MeuNaTxbeta-4 from Mesobuthus eupeus (Lesser Asian scorpion).